The chain runs to 640 residues: MPGTGLGRLAKRMTAAAAVFFISTSAVLPAQAATAPAAAPPGVPAALKAERAITTVDNGNLHTWWHDNGVFSPATPTQSSEVRRSSFYDVQVAQANQPQKLYDAFSYMSIPRSGKGKIGYTEEDGAEFSSDARLTMSWSSFEYAKDVWVEVSLRTGQTISSADQVQIRPSSYNFEKQLVDADTVRIKVPYSDAGYRFSVEFEPQLYTAYNDMSGDSGKLTTEAAGNRPIHTEPRNSMMVFAEPKLRGEQKERLVPTEESGSIHYPEPGEVRNLNSVSEEIIYFRPGTYSMGPDYHAVLPANVKWVYLAPGAYVKGAFRFLHDTQSQYKVTGYGVLSGEQYVYEADTNNSYHHLSGASNCHSSCVKMLQFASADAEQKLDLQGVTVAEPPYHSFVVYGNEQTFHMNVENYKQVGSWYWQTDGIELYKGSTMKNTFFNANDDVLKMYHSDVTIDNTVIWKNENGPVIQWGWTPRNIDNVNVANTTVIHNRMYWKDVKYNTCIFNSSSHWEDMGSTTKADPNTTVKNMRFENTAVEGMTNCAIRVYALSDTENIHIKNFNIGAWNGLEWTSQVSHLKRYTNSAGEKVTIGNEVPDGNGLALENYSVGGQVIEKTGGNSSDYQLGRLGFDGENWENWNAWKSAP.

A signal peptide spans 1–32; that stretch reads MPGTGLGRLAKRMTAAAAVFFISTSAVLPAQA. A propeptide spanning residues 33–49 is cleaved from the precursor; sequence ATAPAAAPPGVPAALKA. Residues 248 to 269 are disordered; that stretch reads EQKERLVPTEESGSIHYPEPGE.

It belongs to the glycosyl hydrolase 49 family.

It is found in the secreted. The catalysed reaction is Endohydrolysis of (1-&gt;6)-alpha-D-glucosidic linkages in dextran.. Its function is as follows. Efficiently decomposes water-insoluble glucan as well as dextran. The sequence is that of Dextranase from Arthrobacter sp. (strain CB-8).